Consider the following 244-residue polypeptide: MEDAGEHLRCNDNVNDEERLPLEFMIGNSTSTAELQPPPPFLVKTYKVVEDPTTDGVISWNEYGTGFVVWQPAEFARDLLPTLFKHCNFSSFVRQLNTYGFRKVTTIRWEFSNEMFRKGQRELMSNIRRRKSQHWSHNKSNHQVVPTTTMVNQEGHQRIGIDHHHEDQQSSATSSSFVYTALLDENKCLKNENELLSCELGKTKKKCKQLMELVERYRGEDEDATDESDDEEDEGLKLFGVKLE.

The DNA-binding element occupies 38 to 132; it reads PPPFLVKTYK…LMSNIRRRKS (95 aa). The tract at residues 173-218 is hydrophobic repeat HR-A/B; sequence TSSSFVYTALLDENKCLKNENELLSCELGKTKKKCKQLMELVERYR. The short motif at 202–208 is the Nuclear localization signal element; it reads KTKKKCK. A disordered region spans residues 216–244; the sequence is RYRGEDEDATDESDDEEDEGLKLFGVKLE. A compositionally biased stretch (acidic residues) spans 220-234; it reads EDEDATDESDDEEDE. Positions 236–243 match the Nuclear export signal motif; the sequence is LKLFGVKL.

Belongs to the HSF family. Class B subfamily. In terms of assembly, homotrimer. In terms of processing, exhibits temperature-dependent phosphorylation.

It is found in the cytoplasm. The protein localises to the nucleus. Its function is as follows. Transcriptional regulator that specifically binds DNA sequence 5'-AGAAnnTTCT-3' known as heat shock promoter elements (HSE). In Arabidopsis thaliana (Mouse-ear cress), this protein is Heat stress transcription factor B-3 (HSFB3).